A 210-amino-acid polypeptide reads, in one-letter code: Thymidylate kinase (210 aa).

10 to 17 (GPDGAGKT) is a binding site for ATP.

The protein belongs to the thymidylate kinase family.

The catalysed reaction is dTMP + ATP = dTDP + ADP. Its function is as follows. Phosphorylation of dTMP to form dTDP in both de novo and salvage pathways of dTTP synthesis. This Geobacillus sp. (strain WCH70) protein is Thymidylate kinase.